The following is a 1185-amino-acid chain: DNA-directed RNA polymerase subunit beta' (1185 aa).

The Zn(2+) site is built by Cys-67, Cys-69, Cys-82, and Cys-85. Mg(2+) is bound by residues Asp-457, Asp-459, and Asp-461. Cys-802, Cys-876, Cys-883, and Cys-886 together coordinate Zn(2+).

It belongs to the RNA polymerase beta' chain family. In terms of assembly, the RNAP catalytic core consists of 2 alpha, 1 beta, 1 beta' and 1 omega subunit. When a sigma factor is associated with the core the holoenzyme is formed, which can initiate transcription. It depends on Mg(2+) as a cofactor. The cofactor is Zn(2+).

It carries out the reaction RNA(n) + a ribonucleoside 5'-triphosphate = RNA(n+1) + diphosphate. Functionally, DNA-dependent RNA polymerase catalyzes the transcription of DNA into RNA using the four ribonucleoside triphosphates as substrates. This chain is DNA-directed RNA polymerase subunit beta', found in Clostridium novyi (strain NT).